Reading from the N-terminus, the 644-residue chain is MADPEGTNGAGMGCTGWFEVEAVIERRTGDNISEDEDETADDSGTDLLEFIDDSMENSIQADTEAARALFNIQEGEDDLNAVCALKRKFAACSQSAAEDVVDRAANPCRTSINKNKECTYRKRKIDELEDSGYGNTEVETQQMVQQVESQNGDTNLNDLESSGVGDDSEVSCETNVDSCENVTLQEISNVLHSSNTKANILYKFKEAYGISFMELVRPFKSDKTSCTDWCITGYGISPSVAESLKVLIKQHSLYTHLQCLTCDRGIIILLLIRFRCSKNRLTVAKLMSNLLSIPETCMVIEPPKLRSQTCALYWFRTAMSNISDVQGTTPEWIDRLTVLQHSFNDNIFDLSEMVQWAYDNELTDDSDIAYYYAQLADSNSNAAAFLKSNSQAKIVKDCGIMCRHYKKAEKRKMSIGQWIQSRCEKTNDGGNWRPIVQLLRYQNIEFTAFLGAFKKFLKGIPKKSCMLICGPANTGKSYFGMSLIQFLKGCVISCVNSKSHFWLQPLSDAKIGMIDDVTPISWTYIDDYMRNALDGNEISIDVKHRALVQLKCPPLLLTSNTNAGTDSRWPYLHSRLTVFEFKNPFPFDENGNPVYAINDENWKSFFSRTWCKLDLIEEEDKENHGGNISTFKCSAGENTRSLRS.

Residues 86-88 (KRK) carry the Nuclear localization signal motif. The interval 179-345 (CENVTLQEIS…LTVLQHSFND (167 aa)) is DNA-binding region. A required for E2 binding region spans residues 312–644 (LYWFRTAMSN…AGENTRSLRS (333 aa)). One can recognise an SF3 helicase domain in the interval 444-594 (IEFTAFLGAF…FPFDENGNPV (151 aa)). 470 to 477 (GPANTGKS) serves as a coordination point for ATP. Lys551 participates in a covalent cross-link: Glycyl lysine isopeptide (Lys-Gly) (interchain with G-Cter in SUMO).

This sequence belongs to the papillomaviridae E1 protein family. As to quaternary structure, can form hexamers. Interacts with E2 protein; this interaction increases E1 DNA binding specificity. Interacts with host DNA polymerase subunit POLA2. Interacts with host single stranded DNA-binding protein RPA1. Interacts with host TOP1; this interaction stimulates the enzymatic activity of TOP1. Post-translationally, phosphorylated. In terms of processing, sumoylated.

The protein localises to the host nucleus. It carries out the reaction Couples ATP hydrolysis with the unwinding of duplex DNA by translocating in the 3'-5' direction.. The enzyme catalyses ATP + H2O = ADP + phosphate + H(+). In terms of biological role, ATP-dependent DNA 3'-5' helicase required for initiation of viral DNA replication. It forms a complex with the viral E2 protein. The E1-E2 complex binds to the replication origin which contains binding sites for both proteins. During the initial step, a dimer of E1 interacts with a dimer of protein E2 leading to a complex that binds the viral origin of replication with high specificity. Then, a second dimer of E1 displaces the E2 dimer in an ATP-dependent manner to form the E1 tetramer. Following this, two E1 monomers are added to each half of the site, which results in the formation of two E1 trimers on the viral ori. Subsequently, two hexamers will be created. The double hexamer acts as a bi-directional helicase machinery and unwinds the viral DNA and then recruits the host DNA polymerase to start replication. This Human papillomavirus 33 protein is Replication protein E1.